We begin with the raw amino-acid sequence, 329 residues long: MALGPGCRAVRGCRPVLKRAFSLHKAHSVKDMESILQLVRSVVPALTTKKHKGQDGRIGVVGGCREYTGAPYFAAISALKVGADLSHVFCTQEAAPVIKAYSPELIVHPVLDSPEAVRDVEQWLPRLHALVVGPGLGRDDALLENVKGILEASKARGIPVVIDADGLWLIAQQPALIQGYRKAVLTPNHVEFGRLSEAVLGVPLDGGDRHGAVLRLSQALGNVTVVQKGEQDVISDGEQVLECSQEGSGRRCGGQGDLLSGSLGVLAHWALRAGPQKTGGPSPLLVAAFGACALTRQCSQQAFQKYGRATTTSDMVAEVGPAFRRLFEA.

The transit peptide at 1–28 directs the protein to the mitochondrion; sequence MALGPGCRAVRGCRPVLKRAFSLHKAHS. In terms of domain architecture, YjeF C-terminal spans 35–326; it reads ILQLVRSVVP…AEVGPAFRRL (292 aa). Position 49 is an N6-acetyllysine (Lys-49). Tyr-67 bears the Phosphotyrosine mark. (6S)-NADPHX is bound by residues Gly-135 and 188 to 194; that span reads NHVEFGR. Residues 228 to 232 and 247 to 256 each bind ATP; these read KGEQD and GSGRRCGGQG. Asp-257 contacts (6S)-NADPHX.

It belongs to the NnrD/CARKD family. It depends on Mg(2+) as a cofactor.

The protein resides in the mitochondrion. The catalysed reaction is (6S)-NADHX + ATP = ADP + phosphate + NADH + H(+). It carries out the reaction (6S)-NADPHX + ATP = ADP + phosphate + NADPH + H(+). Functionally, catalyzes the dehydration of the S-form of NAD(P)HX at the expense of ATP, which is converted to ADP. Together with NAD(P)HX epimerase, which catalyzes the epimerization of the S- and R-forms, the enzyme allows the repair of both epimers of NAD(P)HX, a damaged form of NAD(P)H that is a result of enzymatic or heat-dependent hydration. This Bos taurus (Bovine) protein is ATP-dependent (S)-NAD(P)H-hydrate dehydratase.